The primary structure comprises 186 residues: ADP-ribosylation factor-like protein 6 (186 aa).

The N-myristoyl glycine moiety is linked to residue Gly-2. GTP contacts are provided by residues 24–31, Thr-50, 69–73, Gly-72, 130–133, and Ala-164; these read GLDNSGKT, DMSGQ, and NKMD. Residues Thr-31 and Thr-50 each contribute to the Mg(2+) site.

It belongs to the small GTPase superfamily. Arf family. Interacts with SEC61B, ARL6IP1, ARL6IP2, ARL6IP3, ARL6IP4 ARL6IP5 and ARL6IP6. Interacts (GTP-bound form) with the BBSome a complex that contains BBS1, BBS2, BBS4, BBS5, BBS7, BBS8/TTC8, BBS9 and BBIP10. Interacts (GTP-free form) with IFT27.

It localises to the cell projection. It is found in the cilium membrane. The protein localises to the cytoplasm. Its subcellular location is the cytoskeleton. The protein resides in the cilium axoneme. It localises to the cilium basal body. Functionally, involved in membrane protein trafficking at the base of the ciliary organelle. Mediates recruitment onto plasma membrane of the BBSome complex which would constitute a coat complex required for sorting of specific membrane proteins to the primary cilia. Together with BBS1, is necessary for correct trafficking of PKD1 to primary cilia. Together with the BBSome complex and LTZL1, controls SMO ciliary trafficking and contributes to the sonic hedgehog (SHH) pathway regulation. May regulate cilia assembly and disassembly and subsequent ciliary signaling events such as the Wnt signaling cascade. Isoform 2 may be required for proper retinal function and organization. The sequence is that of ADP-ribosylation factor-like protein 6 (ARL6) from Homo sapiens (Human).